Consider the following 86-residue polypeptide: Kappa-theraphotoxin-Cg1c (86 aa).

A signal peptide spans 1–21 (MKVSVLITLAVLGVMFVWASA). Residues 22–50 (AELEERGSDHRDSPAWLKSMERIFQSEER) constitute a propeptide that is removed on maturation. Disulfide bonds link Cys-52-Cys-66, Cys-59-Cys-71, and Cys-65-Cys-78.

This sequence belongs to the neurotoxin 10 (Hwtx-1) family. 28 (Jztx-11) subfamily. Expressed by the venom gland.

It localises to the secreted. Its function is as follows. Probable ion channel inhibitor. This chain is Kappa-theraphotoxin-Cg1c, found in Chilobrachys guangxiensis (Chinese earth tiger tarantula).